The chain runs to 272 residues: Indole-3-glycerol phosphate synthase (272 aa).

This sequence belongs to the TrpC family.

It catalyses the reaction 1-(2-carboxyphenylamino)-1-deoxy-D-ribulose 5-phosphate + H(+) = (1S,2R)-1-C-(indol-3-yl)glycerol 3-phosphate + CO2 + H2O. Its pathway is amino-acid biosynthesis; L-tryptophan biosynthesis; L-tryptophan from chorismate: step 4/5. This Mycobacteroides abscessus (strain ATCC 19977 / DSM 44196 / CCUG 20993 / CIP 104536 / JCM 13569 / NCTC 13031 / TMC 1543 / L948) (Mycobacterium abscessus) protein is Indole-3-glycerol phosphate synthase.